Reading from the N-terminus, the 118-residue chain is V-type proton ATPase subunit G 2 (118 aa).

Residues 8–57 are a coiled coil; it reads IQQLLQAEKRAAEKVADARKRKARRLKQAKEEAQMEVDQYRREREQEFQS. A disordered region spans residues 25–90; sequence ARKRKARRLK…VQGMQSSQQR (66 aa). Residues 35–55 show a composition bias toward basic and acidic residues; that stretch reads QAKEEAQMEVDQYRREREQEF. Polar residues-rich tracts occupy residues 56 to 69 and 78 to 89; these read QSKQ…QGNL and RRQVQGMQSSQQ.

This sequence belongs to the V-ATPase G subunit family. In terms of assembly, V-ATPase is a heteromultimeric enzyme made up of two complexes: the ATP-hydrolytic V1 complex and the proton translocation V0 complex. The V1 complex consists of three catalytic AB heterodimers that form a heterohexamer, three peripheral stalks each consisting of EG heterodimers, one central rotor including subunits D and F, and the regulatory subunits C and H. The proton translocation complex V0 consists of the proton transport subunit a, a ring of proteolipid subunits c9c'', rotary subunit d, subunits e and f, and the accessory subunits ATP6AP1/Ac45 and ATP6AP2/PRR. As to expression, expressed in brain (at protein level).

The protein resides in the melanosome. It localises to the cytoplasmic vesicle. Its subcellular location is the clathrin-coated vesicle membrane. Its function is as follows. Subunit of the V1 complex of vacuolar(H+)-ATPase (V-ATPase), a multisubunit enzyme composed of a peripheral complex (V1) that hydrolyzes ATP and a membrane integral complex (V0) that translocates protons. V-ATPase is responsible for acidifying and maintaining the pH of intracellular compartments and in some cell types, is targeted to the plasma membrane, where it is responsible for acidifying the extracellular environment. This is V-type proton ATPase subunit G 2 from Bos taurus (Bovine).